The chain runs to 220 residues: Large ribosomal subunit protein uL10c (220 aa).

A chloroplast-targeting transit peptide spans 1–41 (MEVALLSFSSSLSPLCHQRISTLTPKTSNSPNYPRLPVIRS).

This sequence belongs to the universal ribosomal protein uL10 family. Part of the 50S ribosomal subunit.

Its subcellular location is the plastid. The protein resides in the chloroplast. Functionally, this protein binds directly to 23S ribosomal RNA. The chain is Large ribosomal subunit protein uL10c (RPL10) from Arabidopsis thaliana (Mouse-ear cress).